We begin with the raw amino-acid sequence, 249 residues long: DNA repair protein RecO (249 aa).

Belongs to the RecO family.

Functionally, involved in DNA repair and RecF pathway recombination. This is DNA repair protein RecO from Afipia carboxidovorans (strain ATCC 49405 / DSM 1227 / KCTC 32145 / OM5) (Oligotropha carboxidovorans).